Consider the following 333-residue polypeptide: Protoheme IX farnesyltransferase (333 aa).

Helical transmembrane passes span 36 to 56, 61 to 81, 107 to 127, 130 to 150, 158 to 178, 186 to 206, 243 to 263, and 284 to 304; these read LIPL…GWPL, LVCT…LNCL, AAFA…VSGV, LAAG…TALL, IVIG…AATG, WLFA…ALLL, FLGV…LLPF, and AKGL…LLVF.

This sequence belongs to the UbiA prenyltransferase family. Protoheme IX farnesyltransferase subfamily.

It is found in the cell inner membrane. The enzyme catalyses heme b + (2E,6E)-farnesyl diphosphate + H2O = Fe(II)-heme o + diphosphate. It functions in the pathway porphyrin-containing compound metabolism; heme O biosynthesis; heme O from protoheme: step 1/1. Its function is as follows. Converts heme B (protoheme IX) to heme O by substitution of the vinyl group on carbon 2 of heme B porphyrin ring with a hydroxyethyl farnesyl side group. This chain is Protoheme IX farnesyltransferase, found in Synechococcus sp. (strain WH7803).